The primary structure comprises 301 residues: UDP-N-acetylenolpyruvoylglucosamine reductase (301 aa).

Residues 29-195 enclose the FAD-binding PCMH-type domain; sequence KIGGPADVFV…VEAIFSLTRG (167 aa). The active site involves Arg-174. The active-site Proton donor is the Ser-224. Glu-294 is a catalytic residue.

The protein belongs to the MurB family. It depends on FAD as a cofactor.

The protein localises to the cytoplasm. It carries out the reaction UDP-N-acetyl-alpha-D-muramate + NADP(+) = UDP-N-acetyl-3-O-(1-carboxyvinyl)-alpha-D-glucosamine + NADPH + H(+). It functions in the pathway cell wall biogenesis; peptidoglycan biosynthesis. Cell wall formation. The protein is UDP-N-acetylenolpyruvoylglucosamine reductase of Halalkalibacterium halodurans (strain ATCC BAA-125 / DSM 18197 / FERM 7344 / JCM 9153 / C-125) (Bacillus halodurans).